We begin with the raw amino-acid sequence, 425 residues long: Imidazolonepropionase (425 aa).

Fe(3+) contacts are provided by histidine 78 and histidine 80. Zn(2+)-binding residues include histidine 78 and histidine 80. 3 residues coordinate 4-imidazolone-5-propanoate: arginine 87, tyrosine 150, and histidine 183. Tyrosine 150 is a binding site for N-formimidoyl-L-glutamate. Fe(3+) is bound at residue histidine 248. Histidine 248 is a Zn(2+) binding site. Glutamine 251 contacts 4-imidazolone-5-propanoate. Aspartate 323 is a binding site for Fe(3+). Aspartate 323 contacts Zn(2+). N-formimidoyl-L-glutamate is bound by residues asparagine 325 and glycine 327. Position 328 (threonine 328) interacts with 4-imidazolone-5-propanoate.

The protein belongs to the metallo-dependent hydrolases superfamily. HutI family. Zn(2+) is required as a cofactor. Fe(3+) serves as cofactor.

Its subcellular location is the cytoplasm. The catalysed reaction is 4-imidazolone-5-propanoate + H2O = N-formimidoyl-L-glutamate. Its pathway is amino-acid degradation; L-histidine degradation into L-glutamate; N-formimidoyl-L-glutamate from L-histidine: step 3/3. Catalyzes the hydrolytic cleavage of the carbon-nitrogen bond in imidazolone-5-propanoate to yield N-formimidoyl-L-glutamate. It is the third step in the universal histidine degradation pathway. The chain is Imidazolonepropionase from Polaromonas sp. (strain JS666 / ATCC BAA-500).